An 825-amino-acid chain; its full sequence is Osmosensitive cation channel TMEM63C (825 aa).

Topologically, residues 1 to 50 (MAFESWPAGGVRPVEELDVRSFLMEENSTAERCYRSHSRSSVLQGLPFGG) are extracellular. Residues 51–75 (VPTVLAINVVLWLILLLIFSCLRKA) form a helical membrane-spanning segment. At 76–141 (AWDYGRLALL…KDEEIRSKCG (66 aa)) the chain is on the cytoplasmic side. Positions 98-117 (EQSEKEKTPSDSSPSDSETK) are disordered. Residues 142–174 (IDAVTYLSFQRHIILLMMVVCLLSLTIILPVNL) form a helical membrane-spanning segment. At 175 to 198 (SGNLLGDNPENFGRTTVVNVPAQN) the chain is on the extracellular side. A helical membrane pass occupies residues 199–223 (IFLWLHSIFALLYFVITVLCMAHHS). The Cytoplasmic segment spans residues 224–418 (SRLEYREDEK…IIWENLSVCG (195 aa)). The helical transmembrane segment at 419 to 448 (PRWWLRCILLNILLFLLLFFLTTPAIIVNT) threads the bilayer. The Extracellular portion of the chain corresponds to 449 to 463 (MDKFNVTRPVESLRN). A helical membrane pass occupies residues 464–493 (PVITQFFPTLLLWAFSILLPFIVYYSSFFE). Residues 494–497 (YHWT) lie on the Cytoplasmic side of the membrane. A helical membrane pass occupies residues 498 to 534 (RSGENQVTMHKCFLLLVFMVIILPSLGLSSLNLFFRW). Topologically, residues 535-557 (LFDVRFLDETDVKFQCVFLPDNG) are extracellular. Residues 558-590 (AFFVNYVITSSLIGTAMELLRIPALLVYSLRLC) form a helical membrane-spanning segment. Residues 591–610 (FAKSKAECIHVKISQAYEFQ) lie on the Cytoplasmic side of the membrane. A helical membrane pass occupies residues 611 to 629 (FGLEYAWTMCIFSVSMTYS). The Extracellular segment spans residues 630 to 632 (ITC). A helical membrane pass occupies residues 633-657 (PVIVPFGLLYLVLKHMVDRYNIYYA). The Cytoplasmic segment spans residues 658–664 (YTPTKLN). A helical membrane pass occupies residues 665–693 (QRIHAAAISQVVVAPILCMFWLLFFSVLR). Topologically, residues 694–698 (LGPVQ) are extracellular. A helical transmembrane segment spans residues 699-719 (PITLFTFITLLCSIAFSCFGF). At 720 to 825 (CMKKLRADRS…LLMDSPVAFQ (106 aa)) the chain is on the cytoplasmic side. Residues 777-825 (SPAHQSYGTMVNSQSSVRDAEEDEEKDLEETLETELKDDLLMDSPVAFQ) are disordered. Positions 779–793 (AHQSYGTMVNSQSSV) are enriched in polar residues. Over residues 796-809 (AEEDEEKDLEETLE) the composition is skewed to acidic residues.

The protein belongs to the CSC1 (TC 1.A.17) family. In terms of assembly, monomer.

The protein resides in the endoplasmic reticulum membrane. Its subcellular location is the cell membrane. The enzyme catalyses Ca(2+)(in) = Ca(2+)(out). Functionally, acts as an osmosensitive cation channel preferentially activated upon hypotonic stress. In contrast to tmem63b, does not show phospholipid scramblase activity. Required for the functional integrity of the kidney glomerular filtration barrier. The polypeptide is Osmosensitive cation channel TMEM63C (tmem63c) (Danio rerio (Zebrafish)).